The primary structure comprises 391 residues: ETS-related transcription factor Elf-3 (391 aa).

Residues 65-151 (DPLAVLHLAE…AQLRDLTSNS (87 aa)) form the PNT domain. The interval 200 to 271 (YCSTYGPGAP…HGKRKRGRPR (72 aa)) is disordered. A compositionally biased stretch (polar residues) spans 211-229 (PGSSDVSTARTATPQSSHA). Positions 242–261 (TESKVFPRDGFPDYKKGEPK) are enriched in basic and acidic residues. A compositionally biased stretch (basic residues) spans 262-271 (HGKRKRGRPR). Residues 293–375 (THLWEFIRDI…DGRRLVYKFG (83 aa)) constitute a DNA-binding region (ETS).

This sequence belongs to the ETS family. Interacts with TBP. Interacts with CREBBP and EP300; these act as transcriptional coactivators of ELF3 and positively modulate its function. Interacts with XRCC5/KU86 and XRCC6/KU70; these inhibit the ability of ELF3 to bind DNA and negatively modulate its transcriptional activity. Associated with CLND7 and POU2F3. Interacts with ZNF768. Expressed in small intestine, colon, lung, kidney and uterus. Also expressed in the corneal epithelium and conjunctiva of the developing and adult eye. Not detected in liver, spleen, thymus, brain, heart, skeletal muscle or ovary.

It is found in the cytoplasm. Its subcellular location is the nucleus. In terms of biological role, transcriptional activator that binds and transactivates ETS sequences containing the consensus nucleotide core sequence GGA[AT]. Acts synergistically with POU2F3 to transactivate the SPRR2A promoter and with RUNX1 to transactivate the ANGPT1 promoter. Also transactivates collagenase, CCL20, CLND7, FLG, KRT8, NOS2, PTGS2, SPRR2B, TGFBR2 and TGM3 promoters. Represses KRT4 promoter activity. Involved in mediating vascular inflammation. May play an important role in epithelial cell differentiation and tumorigenesis. May be a critical downstream effector of the ERBB2 signaling pathway. May be associated with mammary gland development and involution. Plays an important role in the regulation of transcription with TATA-less promoters in preimplantation embryos, which is essential in preimplantation development. This Mus musculus (Mouse) protein is ETS-related transcription factor Elf-3.